Reading from the N-terminus, the 593-residue chain is Mitochondrial sodium/calcium exchanger protein (593 aa).

The signal sequence occupies residues 1–20; it reads MGPLWALRVAGALSVAGVLA. Over 21–93 the chain is Extracellular; sequence GHDGSQRAGQ…GAFCTFPSSL (73 aa). Asparagine 58 carries an N-linked (GlcNAc...) asparagine glycan. A helical transmembrane segment spans residues 94–114; that stretch reads LPLSVSLYALWLLYLFVILGV. Residues 115 to 135 are Cytoplasmic-facing; the sequence is TAEKFFCPNLSAISTNLKLSH. A helical membrane pass occupies residues 136 to 158; the sequence is NGLGVVGHSLTPALHGVTFLAFG. The Extracellular portion of the chain corresponds to 159-178; that stretch reads NGAPDIFSAVVAFSDPRTAG. A helical membrane pass occupies residues 179-199; that stretch reads LAVGAIFGAGIFVTTVVAGGI. The Cytoplasmic portion of the chain corresponds to 200 to 215; it reads ALVKPFAAASRPFLRD. A helical membrane pass occupies residues 216 to 236; sequence VIFYMVAVFLTFLVLYFGYIT. Residues 237 to 239 are Extracellular-facing; sequence LGE. A helical transmembrane segment spans residues 240–260; it reads ALGYLGLYVFYVFTVVLCTWI. Residues 261–334 lie on the Cytoplasmic side of the membrane; that stretch reads HRWQRGDGPP…KWRRKPWYWR (74 aa). Residues 268–277 are compositionally biased toward pro residues; it reads GPPPPGPWEP. The disordered stretch occupies residues 268-291; that stretch reads GPPPPGPWEPAIPTDAEEQESSGT. The helical transmembrane segment at 335 to 355 threads the bilayer; the sequence is LFKVLKVPVELVLLLTVPVVD. The Extracellular segment spans residues 356–369; that stretch reads PDKDDLNWKRPLNC. The chain crosses the membrane as a helical span at residues 370-390; that stretch reads LHIVTGPLLCIFTLKSGAYGL. At 391 to 395 the chain is on the cytoplasmic side; sequence YQIQG. A helical transmembrane segment spans residues 396–416; it reads VFPVWALVALAGSVLAIIVFV. Over 417–428 the chain is Extracellular; it reads TTHNEEPPKYHC. The chain crosses the membrane as a helical span at residues 429-449; the sequence is VFAFLGFLSSAMWINAAATEL. Topologically, residues 450–454 are cytoplasmic; sequence VNILR. Residues 455–475 form a helical membrane-spanning segment; sequence TLGIIFELSNTVLGLTLLAWG. Topologically, residues 476-496 are extracellular; that stretch reads NSIGDTFSDLTMARQGYPRMA. Residues 497-517 form a helical membrane-spanning segment; it reads FSACFGGIIFNILVGVGLGCL. Over 518 to 533 the chain is Cytoplasmic; sequence LQMTNSQMVVKLEPDS. A helical membrane pass occupies residues 534–554; it reads LLVWILAGALGLSLVFSFVAV. The Extracellular portion of the chain corresponds to 555 to 564; the sequence is PAQCFQLGKA. Residues 565–585 form a helical membrane-spanning segment; it reads YGTCLILYYLVFLCVALLTEF. Over 586 to 593 the chain is Cytoplasmic; the sequence is RVIHLAAT.

Belongs to the Ca(2+):cation antiporter (CaCA) (TC 2.A.19) family. SLC24A subfamily.

It localises to the mitochondrion inner membrane. The catalysed reaction is Ca(2+)(in) + 3 Na(+)(out) = Ca(2+)(out) + 3 Na(+)(in). Its function is as follows. Mitochondrial sodium/calcium antiporter that mediates sodium-dependent calcium efflux from mitochondrion, by mediating the exchange of 3 sodium ions per 1 calcium ion. Plays a central role in mitochondrial calcium homeostasis by mediating mitochondrial calcium extrusion: calcium efflux is essential for mitochondrial function and cell survival, notably in cardiomyocytes. Involved in B-lymphocyte chemotaxis. The sequence is that of Mitochondrial sodium/calcium exchanger protein from Gallus gallus (Chicken).